A 261-amino-acid chain; its full sequence is Hydroxyethylthiazole kinase (261 aa).

Residue M39 coordinates substrate. Residues R115 and T159 each coordinate ATP. Substrate is bound at residue G186.

Belongs to the Thz kinase family. Mg(2+) serves as cofactor.

It carries out the reaction 5-(2-hydroxyethyl)-4-methylthiazole + ATP = 4-methyl-5-(2-phosphooxyethyl)-thiazole + ADP + H(+). It functions in the pathway cofactor biosynthesis; thiamine diphosphate biosynthesis; 4-methyl-5-(2-phosphoethyl)-thiazole from 5-(2-hydroxyethyl)-4-methylthiazole: step 1/1. Catalyzes the phosphorylation of the hydroxyl group of 4-methyl-5-beta-hydroxyethylthiazole (THZ). In Macrococcus caseolyticus (strain JCSC5402) (Macrococcoides caseolyticum), this protein is Hydroxyethylthiazole kinase.